A 414-amino-acid polypeptide reads, in one-letter code: Arrestin domain-containing protein 3 (414 aa).

2 consecutive short sequence motifs (PPxY motif) follow at residues 346-349 (PPSY) and 391-394 (PPLY). Positions 393–414 (LYSEIDPNPDQSADDRPSCPSR) are disordered. Residues 405 to 414 (ADDRPSCPSR) are compositionally biased toward basic and acidic residues.

The protein belongs to the arrestin family. Interacts (via PPxY motifs) with NEDD4 (via WW domains). Interacts with ADRB2. Interacts with ADRB3. Interacts with HGS (via PPxY motifs). Does not bind TXN (thioredoxin). Interacts with ITCH.

It is found in the cytoplasm. It localises to the cell membrane. The protein localises to the lysosome. The protein resides in the endosome. Its subcellular location is the early endosome. In terms of biological role, adapter protein that plays a role in regulating cell-surface expression of adrenergic receptors and probably also other G protein-coupled receptors. Plays a role in NEDD4-mediated ubiquitination and endocytosis af activated ADRB2 and subsequent ADRB2 degradation. May recruit NEDD4 to ADRB2. Alternatively, may function as adapter protein that does not play a major role in recruiting NEDD4 to ADRB2, but rather plays a role in a targeting ADRB2 to endosomes. This is Arrestin domain-containing protein 3 (ARRDC3) from Pongo abelii (Sumatran orangutan).